Consider the following 377-residue polypeptide: UPF0754 membrane protein LMHCC_0318 (377 aa).

Transmembrane regions (helical) follow at residues 1 to 21 and 357 to 377; these read MSVL…GAMT and YLGG…AMWI.

The protein belongs to the UPF0754 family.

The protein localises to the cell membrane. In Listeria monocytogenes serotype 4a (strain HCC23), this protein is UPF0754 membrane protein LMHCC_0318.